The chain runs to 429 residues: MPSIEDELFPSTPGKFKIDRSNRQLHRCFASTSTMFLWALFLIALTASYLSFQSFVDSGSRYLTASWGGIQWEKQVRTSAQIHRSGGISVLVTGATGFVGSHVSLALRKRGDGVVGLDNFNNYYDPSLKRARRSLLSSRGIFVVEGDLNDAKLLAKLFDVVAFTHVMHLAAQAGVRYALENPQSYVHSNIAGLVNLLEICKAANPQPAIVWASSSSVYGLNEKVPFSESDRTDQPASLYAATKKAGEEITHTYNHIYGLAITGLRFFTVYGPWGRPDMAYFSFTRNILQGKPITIYRGKNRVDLARDFTYIDDIVKGCLGSLDSSGKSTGSGGKKRGAAPYRIFNLGNTSPVTVPILVDILEKHLKVKAKRNFVEMPGNGDVPFTHANISSARNEFGYKPTTDLETGLKKFVRWYLSYYGYNTKAKLVH.

2 helical membrane passes run 36–56 (FLWA…QSFV) and 87–107 (GISV…SLAL). An NAD(+)-binding site is contributed by 89–120 (SVLVTGATGFVGSHVSLALRKRGDGVVGLDNF). The Proton acceptor role is filled by Tyr239.

It belongs to the NAD(P)-dependent epimerase/dehydratase family. In terms of assembly, homodimer. In root stele, leaves, siliques, flowers, pollen and stems.

The protein localises to the golgi apparatus. It localises to the golgi stack membrane. The catalysed reaction is UDP-alpha-D-glucuronate = UDP-alpha-D-galacturonate. With respect to regulation, inhibited by UDP-Xylose. Its function is as follows. UDP-D-glucuronate 4-epimerase involved in the synthesis of the negatively charged monosaccharide that forms the backbone of pectic cell wall components. The protein is UDP-glucuronate 4-epimerase 1 (GAE1) of Arabidopsis thaliana (Mouse-ear cress).